Consider the following 420-residue polypeptide: Phosphatidylinositol 5-phosphate 4-kinase type-2 gamma (420 aa).

Ala2 carries the post-translational modification N-acetylalanine. The residue at position 26 (Ser26) is a Phosphoserine. Positions 43–419 (AADPLVGVFL…RFLDFISNIF (377 aa)) constitute a PIPK domain. The tract at residues 69–75 (VMLLPDD) is required for interaction with PIP5K1A. The residue at position 349 (Ser349) is a Phosphoserine.

In terms of assembly, interacts with PIP5K1A; the interaction inhibits PIP5K1A kinase activity. Post-translationally, phosphorylated, phosphorylation is induced by EGF. Widely expressed, with the most abundant expression in kidney.

The protein localises to the endoplasmic reticulum. The protein resides in the cytoplasm. The catalysed reaction is a 1,2-diacyl-sn-glycero-3-phospho-(1D-myo-inositol-5-phosphate) + ATP = a 1,2-diacyl-sn-glycero-3-phospho-(1D-myo-inositol-4,5-bisphosphate) + ADP + H(+). It carries out the reaction 1,2-dihexadecanoyl-sn-glycero-3-phospho-(1D-myo-inositol-5-phosphate) + ATP = 1,2-dihexadecanoyl-sn-glycero-3-phospho-(1D-myo-inositol-4,5-bisphosphate) + ADP + H(+). It catalyses the reaction 1,2-dihexadecanoyl-sn-glycero-3-phospho-(1D-myo-inositol-5-phosphate) + GTP = 1,2-dihexadecanoyl-sn-glycero-3-phospho-(1D-myo-inositol-4,5-bisphosphate) + GDP + H(+). In terms of biological role, phosphatidylinositol 5-phosphate 4-kinase with low enzymatic activity. May be a GTP sensor, has higher GTP-dependent kinase activity than ATP-dependent kinase activity. PIP4Ks negatively regulate insulin signaling through a catalytic-independent mechanism. They interact with PIP5Ks and suppress PIP5K-mediated PtdIns(4,5)P2 synthesis and insulin-dependent conversion to PtdIns(3,4,5)P3. The chain is Phosphatidylinositol 5-phosphate 4-kinase type-2 gamma from Rattus norvegicus (Rat).